The following is a 464-amino-acid chain: Citrate synthase, mitochondrial (464 aa).

A mitochondrion-targeting transit peptide spans 1–27; that stretch reads MALLTAATRLLGAKNSSCLVLAARHAS. An SIFI-degron motif is present at residues 2-21; that stretch reads ALLTAATRLLGAKNSSCLVL. Residue Lys57 is modified to N6-succinyllysine. Lys76 carries the post-translational modification N6-acetyllysine; alternate. Lys76 is subject to N6-succinyllysine; alternate. 2 positions are modified to N6-succinyllysine: Lys103 and Lys193. The residue at position 226 (Ser226) is a Phosphoserine. Residue His301 is part of the active site. N6-acetyllysine; alternate occurs at positions 321 and 327. Lys321 and Lys327 each carry N6-succinyllysine; alternate. The active site involves His347. Arg356 contributes to the oxaloacetate binding site. At Lys375 the chain carries N6-acetyllysine; alternate. An N6-succinyllysine; alternate modification is found at Lys375. Lys382 carries the post-translational modification N6-acetyllysine. Residue Lys393 is modified to N6-acetyllysine; alternate. Residue Lys393 is modified to N6-succinyllysine; alternate. Residue Lys395 is modified to N6,N6,N6-trimethyllysine. Asp402 is a catalytic residue. Residues Arg428 and Arg448 each contribute to the oxaloacetate site. The residue at position 450 (Lys450) is an N6-succinyllysine. Lys459 carries the post-translational modification N6-acetyllysine; alternate. Lys459 bears the N6-succinyllysine; alternate mark.

The protein belongs to the citrate synthase family. As to quaternary structure, homodimer. Methylated. Trimethylation at Lys-395 by CSKMT decreases citrate synthase activity. Post-translationally, in response to mitochondrial stress, the precursor protein is ubiquitinated by the SIFI complex in the cytoplasm before mitochondrial import, leading to its degradation. Within the SIFI complex, UBR4 initiates ubiquitin chain that are further elongated or branched by KCMF1.

It localises to the mitochondrion matrix. It carries out the reaction oxaloacetate + acetyl-CoA + H2O = citrate + CoA + H(+). Its pathway is carbohydrate metabolism; tricarboxylic acid cycle; isocitrate from oxaloacetate: step 1/2. Key enzyme of the Krebs tricarboxylic acid cycle which catalyzes the synthesis of citrate from acetyl coenzyme A and oxaloacetate. The protein is Citrate synthase, mitochondrial (Cs) of Mus musculus (Mouse).